The sequence spans 124 residues: Colorectal cancer-associated protein 1 (124 aa).

The chain crosses the membrane as a helical span at residues 77-97 (LYGCFCVGLVSGMAISVLLLA).

In terms of tissue distribution, expressed in gastrointestinal and immune tissue, as well as prostate, testis and ovary. Expressed in lamina propria and eosinophils but not in epithelial cells. Expression is greater in benign adjacent tissues than in colon tumors.

The protein localises to the membrane. This chain is Colorectal cancer-associated protein 1 (COLCA1), found in Homo sapiens (Human).